The chain runs to 158 residues: UPF0102 protein GbCGDNIH1_0975 (158 aa).

It belongs to the UPF0102 family.

The chain is UPF0102 protein GbCGDNIH1_0975 from Granulibacter bethesdensis (strain ATCC BAA-1260 / CGDNIH1).